Consider the following 477-residue polypeptide: Ankyrin repeat, SAM and basic leucine zipper domain-containing protein 1 (477 aa).

A phosphoserine mark is found at Ser-17, Ser-18, and Ser-20. 6 ANK repeats span residues 46 to 76, 80 to 109, 112 to 146, 150 to 179, 183 to 212, and 216 to 245; these read EKKE…SVDA, YGWT…NASF, DKQT…DPNV, RLMT…EVNT, NGYT…NKML, and DGKL…PLEG. The SAM domain occupies 274–336; sequence SYAAFGDLEV…KILTALKELE (63 aa).

In terms of assembly, interacts with DDX4, PIWIL1, RANBP9 and TDRD1.

It localises to the cytoplasm. Its function is as follows. Plays a central role during spermatogenesis by repressing transposable elements and preventing their mobilization, which is essential for the germline integrity. Acts via the piRNA metabolic process, which mediates the repression of transposable elements during meiosis by forming complexes composed of piRNAs and Piwi proteins and governs the methylation and subsequent repression of transposons. Its association with pi-bodies suggests a participation in the primary piRNAs metabolic process. Required prior to the pachytene stage to facilitate the production of multiple types of piRNAs, including those associated with repeats involved in the regulation of retrotransposons. May act by mediating protein-protein interactions during germ cell maturation. This is Ankyrin repeat, SAM and basic leucine zipper domain-containing protein 1 (ASZ1) from Ateles geoffroyi (Black-handed spider monkey).